A 188-amino-acid chain; its full sequence is Adenylate kinase (188 aa).

12–17 is a binding site for ATP; the sequence is GSGKTT. Residues 33–62 are NMP; it reads STGDLLRAEVASGSELGKKIDSFISKGNLV. AMP contacts are provided by residues Thr34, Arg39, 60–62, 87–90, and Gln94; these read NLV and GYPR. The tract at residues 129–135 is LID; sequence GRARGAD. An ATP-binding site is contributed by Arg130. Residues Arg132 and Arg144 each contribute to the AMP site. Position 172 (Arg172) interacts with ATP.

Belongs to the adenylate kinase family. In terms of assembly, monomer.

The protein localises to the cytoplasm. The enzyme catalyses AMP + ATP = 2 ADP. It participates in purine metabolism; AMP biosynthesis via salvage pathway; AMP from ADP: step 1/1. In terms of biological role, catalyzes the reversible transfer of the terminal phosphate group between ATP and AMP. Plays an important role in cellular energy homeostasis and in adenine nucleotide metabolism. The sequence is that of Adenylate kinase from Campylobacter curvus (strain 525.92).